Reading from the N-terminus, the 242-residue chain is DNA repair protein RecO (242 aa).

This sequence belongs to the RecO family.

Functionally, involved in DNA repair and RecF pathway recombination. The sequence is that of DNA repair protein RecO from Xanthobacter autotrophicus (strain ATCC BAA-1158 / Py2).